The sequence spans 440 residues: NADH-quinone oxidoreductase subunit D 1 (440 aa).

This sequence belongs to the complex I 49 kDa subunit family. As to quaternary structure, NDH-1 is composed of 14 different subunits. Subunits NuoB, C, D, E, F, and G constitute the peripheral sector of the complex.

It localises to the cell inner membrane. It catalyses the reaction a quinone + NADH + 5 H(+)(in) = a quinol + NAD(+) + 4 H(+)(out). Functionally, NDH-1 shuttles electrons from NADH, via FMN and iron-sulfur (Fe-S) centers, to quinones in the respiratory chain. The immediate electron acceptor for the enzyme in this species is believed to be a menaquinone. Couples the redox reaction to proton translocation (for every two electrons transferred, four hydrogen ions are translocated across the cytoplasmic membrane), and thus conserves the redox energy in a proton gradient. The chain is NADH-quinone oxidoreductase subunit D 1 from Chloroherpeton thalassium (strain ATCC 35110 / GB-78).